The following is an 81-amino-acid chain: MDISRAEQRILHHLAQGGRIEITREGKTITEIRCFTRDGWVYPGVDLELFRKLKRKRAIRSSAGKPYRITERGVRSELNNR.

This sequence belongs to the UPF0386 family.

The protein is UPF0386 protein Smed_0945 of Sinorhizobium medicae (strain WSM419) (Ensifer medicae).